The sequence spans 275 residues: Large ribosomal subunit protein uL2 (275 aa).

Disordered stretches follow at residues 36-55 (GLTG…RRMG) and 224-263 (VVMN…RQNK).

It belongs to the universal ribosomal protein uL2 family. Part of the 50S ribosomal subunit. Forms a bridge to the 30S subunit in the 70S ribosome.

In terms of biological role, one of the primary rRNA binding proteins. Required for association of the 30S and 50S subunits to form the 70S ribosome, for tRNA binding and peptide bond formation. It has been suggested to have peptidyltransferase activity; this is somewhat controversial. Makes several contacts with the 16S rRNA in the 70S ribosome. The protein is Large ribosomal subunit protein uL2 of Rhodospirillum centenum (strain ATCC 51521 / SW).